The sequence spans 133 residues: Protein PsiE homolog (133 aa).

The next 4 membrane-spanning stretches (helical) occupy residues 13-33 (LQWILNIALIILSIVLSIFLI), 55-75 (VESIIVYFLYFEFIALIIKYF), 81-101 (FPLRYFIYIGITALIRLIIVS), and 105-125 (PMETLLYAGAILILVIALYIS).

Belongs to the PsiE family.

It localises to the cell membrane. The protein is Protein PsiE homolog of Bacillus cereus (strain ATCC 10987 / NRS 248).